We begin with the raw amino-acid sequence, 355 residues long: Peptide chain release factor 1 (355 aa).

At Gln-232 the chain carries N5-methylglutamine.

It belongs to the prokaryotic/mitochondrial release factor family. Methylated by PrmC. Methylation increases the termination efficiency of RF1.

The protein resides in the cytoplasm. Peptide chain release factor 1 directs the termination of translation in response to the peptide chain termination codons UAG and UAA. The protein is Peptide chain release factor 1 of Thermobifida fusca (strain YX).